The chain runs to 351 residues: Magnesium-protoporphyrin IX monomethyl ester [oxidative] cyclase 1 (351 aa).

Belongs to the AcsF family. Fe cation is required as a cofactor.

The catalysed reaction is Mg-protoporphyrin IX 13-monomethyl ester + 3 NADPH + 3 O2 + 2 H(+) = 3,8-divinyl protochlorophyllide a + 3 NADP(+) + 5 H2O. Its pathway is porphyrin-containing compound metabolism; chlorophyll biosynthesis (light-independent). Functionally, catalyzes the formation of the isocyclic ring in chlorophyll biosynthesis. Mediates the cyclase reaction, which results in the formation of divinylprotochlorophyllide (Pchlide) characteristic of all chlorophylls from magnesium-protoporphyrin IX 13-monomethyl ester (MgPMME). In Nostoc sp. (strain PCC 7120 / SAG 25.82 / UTEX 2576), this protein is Magnesium-protoporphyrin IX monomethyl ester [oxidative] cyclase 1.